The sequence spans 352 residues: Thiamine-phosphate synthase (352 aa).

The tract at residues 1–128 (MNPTPSETSL…AAEAAAIRYG (128 aa)) is unknown. The interval 63–85 (SYKQARSTSTDTGAGLKHPAQLD) is disordered. The thiamine-phosphate synthase stretch occupies residues 129-352 (LYDLEVTCLN…LLQQLDQATI (224 aa)). 4-amino-2-methyl-5-(diphosphooxymethyl)pyrimidine is bound by residues 180–184 (QYRCK) and Asn-212. 2 residues coordinate Mg(2+): Asp-213 and Asp-232. The 4-amino-2-methyl-5-(diphosphooxymethyl)pyrimidine site is built by Ser-251 and Lys-280. Gly-307 contacts 2-[(2R,5Z)-2-carboxy-4-methylthiazol-5(2H)-ylidene]ethyl phosphate.

It belongs to the thiamine-phosphate synthase family. The cofactor is Mg(2+).

It carries out the reaction 2-[(2R,5Z)-2-carboxy-4-methylthiazol-5(2H)-ylidene]ethyl phosphate + 4-amino-2-methyl-5-(diphosphooxymethyl)pyrimidine + 2 H(+) = thiamine phosphate + CO2 + diphosphate. It catalyses the reaction 2-(2-carboxy-4-methylthiazol-5-yl)ethyl phosphate + 4-amino-2-methyl-5-(diphosphooxymethyl)pyrimidine + 2 H(+) = thiamine phosphate + CO2 + diphosphate. The enzyme catalyses 4-methyl-5-(2-phosphooxyethyl)-thiazole + 4-amino-2-methyl-5-(diphosphooxymethyl)pyrimidine + H(+) = thiamine phosphate + diphosphate. Its pathway is cofactor biosynthesis; thiamine diphosphate biosynthesis; thiamine phosphate from 4-amino-2-methyl-5-diphosphomethylpyrimidine and 4-methyl-5-(2-phosphoethyl)-thiazole: step 1/1. In terms of biological role, condenses 4-methyl-5-(beta-hydroxyethyl)thiazole monophosphate (THZ-P) and 2-methyl-4-amino-5-hydroxymethyl pyrimidine pyrophosphate (HMP-PP) to form thiamine monophosphate (TMP). This is Thiamine-phosphate synthase from Synechococcus sp. (strain CC9605).